We begin with the raw amino-acid sequence, 58 residues long: Bowman-Birk type wound-induced trypsin inhibitor (58 aa).

Intrachain disulfides connect cysteine 4–cysteine 57, cysteine 5–cysteine 20, cysteine 8–cysteine 53, cysteine 10–cysteine 18, cysteine 27–cysteine 34, cysteine 31–cysteine 46, and cysteine 36–cysteine 44.

Belongs to the Bowman-Birk serine protease inhibitor family.

The sequence is that of Bowman-Birk type wound-induced trypsin inhibitor from Medicago sativa (Alfalfa).